Here is a 394-residue protein sequence, read N- to C-terminus: NAC domain-containing protein 3 (394 aa).

Positions 3 to 147 (TPVGLRFCPT…TYTLCKVMFN (145 aa)) constitute an NAC domain. The DNA-binding element occupies 104–153 (IGEKKILMFYTSKESKSDWVIHEYHGFSHNQMMMTYTLCKVMFNGGMREK). Disordered stretches follow at residues 152–173 (EKSSSSPSSSGVSGIEQSRRDS) and 264–300 (NSLTGVFSDDVSSDDNDSDLLTPKTNSIQTSSTCDSF). Residues 155–165 (SSSPSSSGVSG) are compositionally biased toward low complexity. The segment covering 286 to 300 (PKTNSIQTSSTCDSF) has biased composition (polar residues).

Its subcellular location is the nucleus. The sequence is that of NAC domain-containing protein 3 (NAC003) from Arabidopsis thaliana (Mouse-ear cress).